Consider the following 471-residue polypeptide: D-hydantoinase (471 aa).

3 residues coordinate Zn(2+): histidine 58, histidine 60, and lysine 150. Lysine 150 bears the N6-carboxylysine mark. Tyrosine 155 lines the substrate pocket. Histidine 183 and histidine 239 together coordinate Zn(2+). Residue serine 288 participates in substrate binding. Aspartate 315 contacts Zn(2+). A substrate-binding site is contributed by asparagine 337.

It belongs to the metallo-dependent hydrolases superfamily. Hydantoinase/dihydropyrimidinase family. In terms of assembly, homotetramer. Requires Zn(2+) as cofactor. The cofactor is Ni(2+). It depends on Co(2+) as a cofactor. Mn(2+) is required as a cofactor. Carboxylation allows a single lysine to coordinate two zinc ions.

Its activity is regulated as follows. Completely inhibited by p-chloromercuribenzoate and partially inhibited by metal chelating agents. Its function is as follows. Catalyzes the stereospecific hydrolysis of the cyclic amide bond of D-hydantoin. Has no activity on dihydropyrimidines. This is D-hydantoinase from Geobacillus stearothermophilus (Bacillus stearothermophilus).